We begin with the raw amino-acid sequence, 1872 residues long: E3 ubiquitin-protein ligase UBR2 (1872 aa).

The UBR-type zinc finger occupies 96-172; the sequence is TACTRLCFPS…DAFKCKNELN (77 aa). A Glycyl lysine isopeptide (Lys-Gly) (interchain with G-Cter in ubiquitin) cross-link involves residue lysine 709. Residues 1134-1240 are interaction with UBC2; it reads RYLMETAPHV…SSNTINSCCD (107 aa). The segment at 1203–1227 is disordered; sequence NNSVDTSDISTPRTTSPSLSPTRIN. Positions 1212 to 1225 are enriched in low complexity; that stretch reads STPRTTSPSLSPTR. Serine 1218 and serine 1222 each carry phosphoserine. The RING-type; atypical zinc finger occupies 1241–1362; that stretch reads DDCVFCKMPK…GLIYCPVCNS (122 aa).

It belongs to the E3 ubiquitin-protein ligase UBR1-like family. Interacts with MUB1, RPN4 and UBC2.

The protein localises to the cytoplasm. The enzyme catalyses S-ubiquitinyl-[E2 ubiquitin-conjugating enzyme]-L-cysteine + [acceptor protein]-L-lysine = [E2 ubiquitin-conjugating enzyme]-L-cysteine + N(6)-ubiquitinyl-[acceptor protein]-L-lysine.. It functions in the pathway protein modification; protein ubiquitination. Functionally, E3 ubiquitin-protein ligase which probably functions outside the N-end rule pathway, since it lacks the residues essential for the degradation of N-end rule substrates. Mediates RPN4 ubiquitination and subsequent degradation. This chain is E3 ubiquitin-protein ligase UBR2 (UBR2), found in Saccharomyces cerevisiae (strain ATCC 204508 / S288c) (Baker's yeast).